We begin with the raw amino-acid sequence, 386 residues long: Galactokinase (386 aa).

35–38 lines the substrate pocket; sequence EHTD. Residues S69 and 125–131 each bind ATP; that span reads GAGLSSS. Mg(2+) contacts are provided by S131 and E163. Catalysis depends on D175, which acts as the Proton acceptor. Residue Y224 coordinates substrate.

The protein belongs to the GHMP kinase family. GalK subfamily.

The protein localises to the cytoplasm. It catalyses the reaction alpha-D-galactose + ATP = alpha-D-galactose 1-phosphate + ADP + H(+). It participates in carbohydrate metabolism; galactose metabolism. Catalyzes the transfer of the gamma-phosphate of ATP to D-galactose to form alpha-D-galactose-1-phosphate (Gal-1-P). The protein is Galactokinase of Vibrio parahaemolyticus serotype O3:K6 (strain RIMD 2210633).